The sequence spans 129 residues: Glycine cleavage system H protein (129 aa).

The 83-residue stretch at 24–106 folds into the Lipoyl-binding domain; that stretch reads TYTVGITEHA…YAGGWIFKIK (83 aa). K65 carries the post-translational modification N6-lipoyllysine.

This sequence belongs to the GcvH family. In terms of assembly, the glycine cleavage system is composed of four proteins: P, T, L and H. The cofactor is (R)-lipoate.

Its function is as follows. The glycine cleavage system catalyzes the degradation of glycine. The H protein shuttles the methylamine group of glycine from the P protein to the T protein. The protein is Glycine cleavage system H protein of Escherichia coli O7:K1 (strain IAI39 / ExPEC).